A 330-amino-acid chain; its full sequence is Phosphate acyltransferase (330 aa).

It belongs to the PlsX family. As to quaternary structure, homodimer. Probably interacts with PlsY.

The protein localises to the cytoplasm. The enzyme catalyses a fatty acyl-[ACP] + phosphate = an acyl phosphate + holo-[ACP]. Its pathway is lipid metabolism; phospholipid metabolism. Functionally, catalyzes the reversible formation of acyl-phosphate (acyl-PO(4)) from acyl-[acyl-carrier-protein] (acyl-ACP). This enzyme utilizes acyl-ACP as fatty acyl donor, but not acyl-CoA. The protein is Phosphate acyltransferase of Bacillus cereus (strain B4264).